Here is a 1608-residue protein sequence, read N- to C-terminus: Hemolysin (1608 aa).

The first 30 residues, 1–30, serve as a signal peptide directing secretion; the sequence is MKNNNFRLSAAGKLAAALAIILAASAGAYA. Disordered stretches follow at residues 296 to 315, 452 to 488, 716 to 737, 971 to 1030, 1168 to 1199, and 1437 to 1469; these read SRVD…QNYR, KSSE…LRSE, EHTR…LSGG, AVNL…SASQ, AEST…TGGN, and PQQD…QGPL. Composition is skewed to polar residues over residues 303 to 313 and 460 to 474; these read SNKNGGDNYQN and RNHT…WSNS. Composition is skewed to basic and acidic residues over residues 478 to 488 and 716 to 726; these read ESLKASELRSE and EHTRDSEKTTR. The span at 727–736 shows a compositional bias: polar residues; the sequence is TENSASSLSG. Basic and acidic residues predominate over residues 977–996; the sequence is DSHRSEAAANRQDEQSRDTR. A compositionally biased stretch (polar residues) spans 1021–1030; it reads TQRSNSSASQ.

It is found in the cell outer membrane. In terms of biological role, bacterial hemolysins are exotoxins that attack blood cell membranes and cause cell rupture by mechanisms not clearly defined. Functionally, cell-bound hemolysin, which releases heme-iron from erythrocytes by interaction with the erythrocyte membrane. ShlA requires ShlB function. The sequence is that of Hemolysin (shlA) from Serratia marcescens.